Reading from the N-terminus, the 156-residue chain is Small ribosomal subunit protein uS7 (156 aa).

This sequence belongs to the universal ribosomal protein uS7 family. As to quaternary structure, part of the 30S ribosomal subunit. Contacts proteins S9 and S11.

Functionally, one of the primary rRNA binding proteins, it binds directly to 16S rRNA where it nucleates assembly of the head domain of the 30S subunit. Is located at the subunit interface close to the decoding center, probably blocks exit of the E-site tRNA. This is Small ribosomal subunit protein uS7 (rpsG) from Geobacillus stearothermophilus (Bacillus stearothermophilus).